A 428-amino-acid chain; its full sequence is Serine--tRNA ligase (428 aa).

Position 231–233 (231–233 (TAE)) interacts with L-serine. ATP is bound by residues 262 to 264 (RRE) and V278. E285 lines the L-serine pocket. 349–352 (EVSS) contributes to the ATP binding site. S384 is an L-serine binding site.

Belongs to the class-II aminoacyl-tRNA synthetase family. Type-1 seryl-tRNA synthetase subfamily. As to quaternary structure, homodimer. The tRNA molecule binds across the dimer.

The protein resides in the cytoplasm. It carries out the reaction tRNA(Ser) + L-serine + ATP = L-seryl-tRNA(Ser) + AMP + diphosphate + H(+). The catalysed reaction is tRNA(Sec) + L-serine + ATP = L-seryl-tRNA(Sec) + AMP + diphosphate + H(+). Its pathway is aminoacyl-tRNA biosynthesis; selenocysteinyl-tRNA(Sec) biosynthesis; L-seryl-tRNA(Sec) from L-serine and tRNA(Sec): step 1/1. In terms of biological role, catalyzes the attachment of serine to tRNA(Ser). Is also able to aminoacylate tRNA(Sec) with serine, to form the misacylated tRNA L-seryl-tRNA(Sec), which will be further converted into selenocysteinyl-tRNA(Sec). In Chlamydia trachomatis serovar A (strain ATCC VR-571B / DSM 19440 / HAR-13), this protein is Serine--tRNA ligase.